Reading from the N-terminus, the 109-residue chain is MTQSSYNPIEQEGSPELLLQEKIRRPKMYQVLLHNDNYTTMEFVVSILMKIFRKTMEQATSIMLSVHRKGIGVAGVYTRELAETKVNTTHMLAREAGFPLRCTLQEVDE.

Belongs to the ClpS family. Binds to the N-terminal domain of the chaperone ClpA.

Involved in the modulation of the specificity of the ClpAP-mediated ATP-dependent protein degradation. This is ATP-dependent Clp protease adapter protein ClpS from Lawsonia intracellularis (strain PHE/MN1-00).